We begin with the raw amino-acid sequence, 208 residues long: Cell death-inducing p53-target protein 1 (208 aa).

Composition is skewed to pro residues over residues 1 to 13 (MSSEPPPPYPGGP) and 36 to 67 (MQPPPGMPLPPADIGPPPYEPPGHPMPQPGFI). Residues 1–71 (MSSEPPPPYP…PQPGFIPPHM (71 aa)) form a disordered region. The LITAF domain occupies 122 to 206 (ATTVTVLQGE…CKAYIYTYKR (85 aa)). The Zn(2+) site is built by C142 and C145. Residues 164-184 (LGFFCCFMGCDLGCCLIPCLI) form a membrane-binding amphipathic helix region. Zn(2+) is bound by residues C194 and C197.

Belongs to the CDIP1/LITAF family. In terms of tissue distribution, highly expressed in brain. Expressed at lower level in heart, skeletal muscle, kidney, pancreas and liver. Weakly or not expressed in placenta and lung.

The protein resides in the late endosome membrane. It is found in the lysosome membrane. Its function is as follows. Acts as an important p53/TP53-apoptotic effector. Regulates TNF-alpha-mediated apoptosis in a p53/TP53-dependent manner. In Homo sapiens (Human), this protein is Cell death-inducing p53-target protein 1 (CDIP1).